Reading from the N-terminus, the 265-residue chain is uncharacterized protein (265 aa).

Positions Ala143–Ala205 form a coiled coil.

This is an uncharacterized protein from Aquifex aeolicus (strain VF5).